The sequence spans 79 residues: Large ribosomal subunit protein bL28 (79 aa).

The protein belongs to the bacterial ribosomal protein bL28 family.

The chain is Large ribosomal subunit protein bL28 from Porphyromonas gingivalis (strain ATCC 33277 / DSM 20709 / CIP 103683 / JCM 12257 / NCTC 11834 / 2561).